A 188-amino-acid polypeptide reads, in one-letter code: dTTP/UTP pyrophosphatase (188 aa).

Residue Asp-67 is the Proton acceptor of the active site.

It belongs to the Maf family. YhdE subfamily. A divalent metal cation is required as a cofactor.

It is found in the cytoplasm. It carries out the reaction dTTP + H2O = dTMP + diphosphate + H(+). It catalyses the reaction UTP + H2O = UMP + diphosphate + H(+). In terms of biological role, nucleoside triphosphate pyrophosphatase that hydrolyzes dTTP and UTP. May have a dual role in cell division arrest and in preventing the incorporation of modified nucleotides into cellular nucleic acids. The polypeptide is dTTP/UTP pyrophosphatase (Roseobacter denitrificans (strain ATCC 33942 / OCh 114) (Erythrobacter sp. (strain OCh 114))).